The sequence spans 293 residues: ATP synthase gamma chain (293 aa).

The protein belongs to the ATPase gamma chain family. As to quaternary structure, F-type ATPases have 2 components, CF(1) - the catalytic core - and CF(0) - the membrane proton channel. CF(1) has five subunits: alpha(3), beta(3), gamma(1), delta(1), epsilon(1). CF(0) has three main subunits: a, b and c.

Its subcellular location is the cell inner membrane. Functionally, produces ATP from ADP in the presence of a proton gradient across the membrane. The gamma chain is believed to be important in regulating ATPase activity and the flow of protons through the CF(0) complex. In Chlorobium chlorochromatii (strain CaD3), this protein is ATP synthase gamma chain.